The following is a 369-amino-acid chain: Omega-amidase, chloroplastic (369 aa).

A chloroplast-targeting transit peptide spans Met-1–Met-63. Ala-64 bears the N-acetylalanine mark. One can recognise a CN hydrolase domain in the interval Phe-88–Tyr-337. The active-site Proton acceptor is the Glu-127. The active-site Proton donor is the Lys-201. Cys-242 functions as the Nucleophile in the catalytic mechanism.

The protein belongs to the nitrilase superfamily. NIT1/NIT2 family.

It localises to the plastid. The protein resides in the chloroplast. The catalysed reaction is a monoamide of a dicarboxylate + H2O = a dicarboxylate + NH4(+). Omega-amidase involved in the metabolism of asparagine. Probably also closely coupled with glutamine transamination in the methionine salvage cycle. Can use alpha-ketosuccinamate and alpha-hydroxysuccinamate as substrates, producing respectively oxaloacetate and malate, or alpha-ketoglutaramate, producing alpha-ketoglutarate. This chain is Omega-amidase, chloroplastic, found in Arabidopsis thaliana (Mouse-ear cress).